We begin with the raw amino-acid sequence, 385 residues long: DNA double-strand break repair protein Mre11 (385 aa).

The Mn(2+) site is built by aspartate 14, histidine 16, and aspartate 58. Residue histidine 94 is the Proton donor of the active site. Residues histidine 180, histidine 216, and histidine 218 each coordinate Mn(2+).

The protein belongs to the MRE11/RAD32 family. Homodimer. Forms a heterotetramer composed of two Mre11 subunits and two Rad50 subunits. Homodimerization facilitates DNA binding. The cofactor is Mn(2+).

With respect to regulation, nuclease activity is regulated by Rad50. The mirin-derivative PFM39, specifically inhibits the 3'-5' exonuclease activity. The N-alkylated mirin-derivatives PFM03 and PFM01 specifically inhibit the endonuclease activity. Its function is as follows. Part of the Rad50/Mre11 complex, which is involved in the early steps of DNA double-strand break (DSB) repair. The complex may facilitate opening of the processed DNA ends to aid in the recruitment of HerA and NurA. Mre11 binds to DSB ends and has both double-stranded 3'-5' exonuclease activity and single-stranded endonuclease activity. This is DNA double-strand break repair protein Mre11 from Thermotoga maritima (strain ATCC 43589 / DSM 3109 / JCM 10099 / NBRC 100826 / MSB8).